Reading from the N-terminus, the 164-residue chain is Protein 4 (164 aa).

This Lettuce big-vein associated virus (isolate Japan/Kagawa) (LBVaV) protein is Protein 4.